A 495-amino-acid polypeptide reads, in one-letter code: Probable endopolygalacturonase D (495 aa).

An N-terminal signal peptide occupies residues M1–G16. The cysteines at positions 154 and 169 are disulfide-linked. PbH1 repeat units lie at residues M261–N283, T284–Q322, and S323–S344. N-linked (GlcNAc...) asparagine glycosylation is present at N295. The active-site Proton donor is D337. An intrachain disulfide couples C339 to C355. H359 is a catalytic residue. A glycan (N-linked (GlcNAc...) asparagine) is linked at N371. 2 PbH1 repeats span residues V374–S395 and V403–Q425. N-linked (GlcNAc...) asparagine glycans are attached at residues N410 and N444. 2 disulfide bridges follow: C464/C469 and C487/C494. One copy of the PbH1 6 repeat lies at C469–S492.

Belongs to the glycosyl hydrolase 28 family.

It is found in the secreted. It carries out the reaction (1,4-alpha-D-galacturonosyl)n+m + H2O = (1,4-alpha-D-galacturonosyl)n + (1,4-alpha-D-galacturonosyl)m.. In terms of biological role, involved in maceration and soft-rotting of plant tissue. Hydrolyzes the 1,4-alpha glycosidic bonds of de-esterified pectate in the smooth region of the plant cell wall. This chain is Probable endopolygalacturonase D (pgaD), found in Aspergillus niger (strain ATCC MYA-4892 / CBS 513.88 / FGSC A1513).